The following is a 199-amino-acid chain: Small ribosomal subunit protein uS4 (199 aa).

Residues 106 to 170 (RRLQTIVFRK…SPVANELHPI (65 aa)) enclose the S4 RNA-binding domain. Residues 177–199 (PAQRSAEMKEGQGEASEEGETDE) form a disordered region.

The protein belongs to the universal ribosomal protein uS4 family. As to quaternary structure, part of the 30S ribosomal subunit. Contacts protein S5. The interaction surface between S4 and S5 is involved in control of translational fidelity.

Its function is as follows. One of the primary rRNA binding proteins, it binds directly to 16S rRNA where it nucleates assembly of the body of the 30S subunit. In terms of biological role, with S5 and S12 plays an important role in translational accuracy. This is Small ribosomal subunit protein uS4 from Thermoplasma acidophilum (strain ATCC 25905 / DSM 1728 / JCM 9062 / NBRC 15155 / AMRC-C165).